The sequence spans 79 residues: ATP synthase subunit c (79 aa).

Transmembrane regions (helical) follow at residues 11 to 31 (IAAA…IGIL) and 53 to 73 (FFIV…LSLY).

Belongs to the ATPase C chain family. F-type ATPases have 2 components, F(1) - the catalytic core - and F(0) - the membrane proton channel. F(1) has five subunits: alpha(3), beta(3), gamma(1), delta(1), epsilon(1). F(0) has three main subunits: a(1), b(2) and c(10-14). The alpha and beta chains form an alternating ring which encloses part of the gamma chain. F(1) is attached to F(0) by a central stalk formed by the gamma and epsilon chains, while a peripheral stalk is formed by the delta and b chains.

It is found in the cell inner membrane. In terms of biological role, f(1)F(0) ATP synthase produces ATP from ADP in the presence of a proton or sodium gradient. F-type ATPases consist of two structural domains, F(1) containing the extramembraneous catalytic core and F(0) containing the membrane proton channel, linked together by a central stalk and a peripheral stalk. During catalysis, ATP synthesis in the catalytic domain of F(1) is coupled via a rotary mechanism of the central stalk subunits to proton translocation. Its function is as follows. Key component of the F(0) channel; it plays a direct role in translocation across the membrane. A homomeric c-ring of between 10-14 subunits forms the central stalk rotor element with the F(1) delta and epsilon subunits. In Blochmanniella floridana, this protein is ATP synthase subunit c.